The sequence spans 229 residues: DNA repair protein RecO (229 aa).

Belongs to the RecO family.

Involved in DNA repair and RecF pathway recombination. The sequence is that of DNA repair protein RecO from Legionella pneumophila (strain Lens).